A 340-amino-acid polypeptide reads, in one-letter code: ATPase get3 (340 aa).

34–41 lines the ATP pocket; it reads KGGVGKTT. Asp-63 is a catalytic residue. ATP is bound by residues Glu-242 and Asn-269. Residues Cys-280 and Cys-283 each contribute to the Zn(2+) site.

Belongs to the arsA ATPase family. Homodimer.

It is found in the cytoplasm. The protein localises to the endoplasmic reticulum. Functionally, ATPase required for the post-translational delivery of tail-anchored (TA) proteins to the endoplasmic reticulum. Recognizes and selectively binds the transmembrane domain of TA proteins in the cytosol. This complex then targets to the endoplasmic reticulum by membrane-bound receptors, where the tail-anchored protein is released for insertion. This process is regulated by ATP binding and hydrolysis. ATP binding drives the homodimer towards the closed dimer state, facilitating recognition of newly synthesized TA membrane proteins. ATP hydrolysis is required for insertion. Subsequently, the homodimer reverts towards the open dimer state, lowering its affinity for the membrane-bound receptor, and returning it to the cytosol to initiate a new round of targeting. The sequence is that of ATPase get3 (get3) from Sclerotinia sclerotiorum (strain ATCC 18683 / 1980 / Ss-1) (White mold).